A 380-amino-acid chain; its full sequence is Large ribosomal subunit protein mL38 (380 aa).

The N-terminal 26 residues, 1–26, are a transit peptide targeting the mitochondrion; it reads MAAPWWRAALCECRRWRGFSTSAVLG. The stretch at 99–127 forms a coiled coil; sequence RTQQLLERKQAIQELRANVEEERAARLRT.

It belongs to the phosphatidylethanolamine-binding protein family. Mitochondrion-specific ribosomal protein mL38 subfamily. As to quaternary structure, component of the mitochondrial large ribosomal subunit (mt-LSU). Mature mammalian 55S mitochondrial ribosomes consist of a small (28S) and a large (39S) subunit. The 28S small subunit contains a 12S ribosomal RNA (12S mt-rRNA) and 30 different proteins. The 39S large subunit contains a 16S rRNA (16S mt-rRNA), a copy of mitochondrial valine transfer RNA (mt-tRNA(Val)), which plays an integral structural role, and 52 different proteins. mL38 is located at the central protuberance.

It is found in the mitochondrion. The chain is Large ribosomal subunit protein mL38 (MRPL38) from Homo sapiens (Human).